Reading from the N-terminus, the 1368-residue chain is DNA-directed RNA polymerase subunit beta (1368 aa).

Belongs to the RNA polymerase beta chain family. As to quaternary structure, the RNAP catalytic core consists of 2 alpha, 1 beta, 1 beta' and 1 omega subunit. When a sigma factor is associated with the core the holoenzyme is formed, which can initiate transcription.

The catalysed reaction is RNA(n) + a ribonucleoside 5'-triphosphate = RNA(n+1) + diphosphate. DNA-dependent RNA polymerase catalyzes the transcription of DNA into RNA using the four ribonucleoside triphosphates as substrates. The sequence is that of DNA-directed RNA polymerase subunit beta from Legionella pneumophila (strain Paris).